The following is a 122-amino-acid chain: Large ribosomal subunit protein uL18 (122 aa).

The protein belongs to the universal ribosomal protein uL18 family. Part of the 50S ribosomal subunit; part of the 5S rRNA/L5/L18/L25 subcomplex. Contacts the 5S and 23S rRNAs.

In terms of biological role, this is one of the proteins that bind and probably mediate the attachment of the 5S RNA into the large ribosomal subunit, where it forms part of the central protuberance. In Heliobacterium modesticaldum (strain ATCC 51547 / Ice1), this protein is Large ribosomal subunit protein uL18.